The chain runs to 301 residues: Putative dynamin-related protein 4A (301 aa).

One can recognise a Dynamin-type G domain in the interval 59–301 (GIQLPTIVVV…LIDGDIVGIL (243 aa)). The interval 69–76 (GDQSSGKS) is G1 motif. 69-76 (GDQSSGKS) is a GTP binding site. The interval 94 to 96 (CTR) is G2 motif. Residues 168–171 (DLPG) form a G3 motif region. Residues 168–172 (DLPGI) and 237–240 (TKAD) each bind GTP. The tract at residues 237–240 (TKAD) is G4 motif. Position 270 (Glu-270) is a region of interest, G5 motif.

This sequence belongs to the TRAFAC class dynamin-like GTPase superfamily. Dynamin/Fzo/YdjA family.

The chain is Putative dynamin-related protein 4A (DRP4A) from Arabidopsis thaliana (Mouse-ear cress).